Here is a 757-residue protein sequence, read N- to C-terminus: MDVNPTLLFLKVPAQNAISTTFPYTGDPPYSHGTGTGYTMDTVNRTHQYSEKGKWTTNTETGAPQLNPIDGPLPEDNEPSGYAQTDCVLEAMAFLEESHPGIFENSCLETMEVIQQTRVDKLTQGRQTYDWTLNRNQPAATALANTIEVFRSNGLTANESGRLIDFLKDVIESMDKEEMEITTHFQRKRRVRDNMTKKMVTQRTIGKKKQRLNKRIYLIRALTLNTMTKDAERGKLKRRAIATPGMQIRGFVYFVETLARSICENLEQSGLPVGGNEKKAKLANVVRKMMTNSQDTELSFTITGDNTKWNENQNPRIFLAMITYITRNQPEWFRNVLSIAPIMFSNKMARLGKGYMFKSKSMKLRTQIPAEMLTSIDLKYFNESTRKKIEKIRPLLIDGTVSLSPGMMMGMFNMLSTVLGVSILNLGQKKYTKTTYWWDGLQSSDDFALIVNAPNHEGIQAGVDRFYRTCKLVGINMSKKKSYTNRTGTFEFTSFFYRYGFVANFSMELPSFGVSGINESDDMSIGVTVIKNNMINNDLGPATAQMALQLFIKDYRYTYRCHRGDTQIQTRRSFELKKLWEQTRSKAGLLISDGGPNLYNIRNLHIPEVCLKWELMDEDYQGRLCNPLNPFVSHKEIESVNNAVVMPAHGPAKSMEYDAVATTHSWIPKRNRSILNTSQRGILEDQQMYQKCCNLFEKFFPSSSYRRPVGISSMVEAMVSRARIDARIDFESGRIKKEEFAEIMKICSTIEELRRQK.

The segment at 50–82 (SEKGKWTTNTETGAPQLNPIDGPLPEDNEPSGY) is disordered. The segment covering 55 to 64 (WTTNTETGAP) has biased composition (polar residues). 2 consecutive short sequence motifs (nuclear localization signal) follow at residues 187–195 (RKRRVRDNM) and 203–216 (RTIG…NKRI). Residues 249 to 256 (RGFVYFVE) are promoter-binding site. The region spanning 286–483 (VRKMMTNSQD…GINMSKKKSY (198 aa)) is the RdRp catalytic domain.

It belongs to the influenza viruses polymerase PB1 family. As to quaternary structure, influenza RNA polymerase is composed of three subunits: PB1, PB2 and PA. Interacts (via N-terminus) with PA (via C-terminus). Interacts (via C-terminus) with PB2 (via N-terminus); this interaction is essential for transcription initiation. In terms of processing, phosphorylated by host PRKCA.

Its subcellular location is the host nucleus. It localises to the host cytoplasm. It catalyses the reaction RNA(n) + a ribonucleoside 5'-triphosphate = RNA(n+1) + diphosphate. Its function is as follows. RNA-dependent RNA polymerase which is responsible for replication and transcription of virus RNA segments. The transcription of viral mRNAs occurs by a unique mechanism called cap-snatching. 5' methylated caps of cellular mRNAs are cleaved after 10-13 nucleotides by PA. In turn, these short capped RNAs are used as primers by PB1 for transcription of viral mRNAs. During virus replication, PB1 initiates RNA synthesis and copy vRNA into complementary RNA (cRNA) which in turn serves as a template for the production of more vRNAs. This Influenza A virus (strain A/Leningrad/134/47/1957 H2N2) protein is RNA-directed RNA polymerase catalytic subunit.